Reading from the N-terminus, the 316-residue chain is Phosphate acyltransferase (316 aa).

The protein belongs to the PlsX family. In terms of assembly, homodimer. Probably interacts with PlsY.

The protein localises to the cytoplasm. The catalysed reaction is a fatty acyl-[ACP] + phosphate = an acyl phosphate + holo-[ACP]. It participates in lipid metabolism; phospholipid metabolism. Catalyzes the reversible formation of acyl-phosphate (acyl-PO(4)) from acyl-[acyl-carrier-protein] (acyl-ACP). This enzyme utilizes acyl-ACP as fatty acyl donor, but not acyl-CoA. In Chlamydia abortus (strain DSM 27085 / S26/3) (Chlamydophila abortus), this protein is Phosphate acyltransferase.